Reading from the N-terminus, the 362-residue chain is UDP-N-acetylglucosamine--N-acetylmuramyl-(pentapeptide) pyrophosphoryl-undecaprenol N-acetylglucosamine transferase (362 aa).

UDP-N-acetyl-alpha-D-glucosamine is bound by residues 14–16 (TGG), R170, S199, and Q289.

The protein belongs to the glycosyltransferase 28 family. MurG subfamily.

Its subcellular location is the cell inner membrane. The enzyme catalyses di-trans,octa-cis-undecaprenyl diphospho-N-acetyl-alpha-D-muramoyl-L-alanyl-D-glutamyl-meso-2,6-diaminopimeloyl-D-alanyl-D-alanine + UDP-N-acetyl-alpha-D-glucosamine = di-trans,octa-cis-undecaprenyl diphospho-[N-acetyl-alpha-D-glucosaminyl-(1-&gt;4)]-N-acetyl-alpha-D-muramoyl-L-alanyl-D-glutamyl-meso-2,6-diaminopimeloyl-D-alanyl-D-alanine + UDP + H(+). Its pathway is cell wall biogenesis; peptidoglycan biosynthesis. In terms of biological role, cell wall formation. Catalyzes the transfer of a GlcNAc subunit on undecaprenyl-pyrophosphoryl-MurNAc-pentapeptide (lipid intermediate I) to form undecaprenyl-pyrophosphoryl-MurNAc-(pentapeptide)GlcNAc (lipid intermediate II). In Borrelia hermsii (strain HS1 / DAH), this protein is UDP-N-acetylglucosamine--N-acetylmuramyl-(pentapeptide) pyrophosphoryl-undecaprenol N-acetylglucosamine transferase.